The sequence spans 496 residues: Cyclin-L1 (496 aa).

2 cyclin-like regions span residues 68–170 (ELIQ…RILK) and 183–267 (KIIV…TTLR). A disordered region spans residues 301–496 (NPDGTPAILS…SHSGHGRHRR (196 aa)). Residues 322-347 (SPRDVKTEEKSPNFAKVKREMDDKQS) show a composition bias toward basic and acidic residues. Composition is skewed to basic residues over residues 358–392 (ENKR…RRSR), 412–426 (RRHH…KLKH), 434–446 (RHAH…HSPS), and 456–468 (KKHR…HRER). The RS stretch occupies residues 363–406 (RSVSRSRSRTKSRSRSHSPRRHYNNRRRSRSGTYSSRSRSRSRS). Basic and acidic residues predominate over residues 469–478 (RERSRSFERS). Positions 479-496 (HKNKHHGSSHSGHGRHRR) are enriched in basic residues.

This sequence belongs to the cyclin family. Cyclin L subfamily.

It is found in the nucleus speckle. The protein resides in the nucleus. Its subcellular location is the nucleoplasm. In terms of biological role, involved in pre-mRNA splicing. This chain is Cyclin-L1 (ccnl1), found in Xenopus laevis (African clawed frog).